A 488-amino-acid polypeptide reads, in one-letter code: MEKSWFNLMFSKGELEYRSGLNKAMDSIENEKTTISKDRFIYDMDKNFYGWGERSSYYNNVDLLVSSKDIRNFISDDTFFVRDSNKNSYSIYFDIKKKKFEINNDLSDLEFFFYSYSYCSSSYLNNRSKSDNDPHYDPYIKDTKYNCNNHINSCIDSYFRSHICIDSHFLSDSNNSNESYIYNFICSESGKIRESKNYKIRTNRNRNNLMSSKDFDITKNYNQLWIQCDNCYGLMYKKVEMNVCEECGHYLKMTSSERIELSIDPGTWNPMDEDMVSTDPIKFHSGEEPYKNRIDSAQKTTGLTDAVQTGIGQLNGIPTALGVMDFKFMGGSMGSVVGEKITRLIEYATNQCLPLILVCSSGGARMQEGSLSLMQMAKISSVLCNYQSSKKLFYISILTSPTTGGVTASFGMLGDIIIAEPYAYIAFAGKRVIEQTLKKAVPEGSQAAESLLRKGLLDAIVPRNPLKGVVSELFQLHAFFPLNKNEIK.

A CoA carboxyltransferase N-terminal domain is found at 224–488; the sequence is LWIQCDNCYG…FFPLNKNEIK (265 aa). Residues C228, C231, C244, and C247 each contribute to the Zn(2+) site. Residues 228-247 form a C4-type zinc finger; that stretch reads CDNCYGLMYKKVEMNVCEEC.

This sequence belongs to the AccD/PCCB family. In terms of assembly, acetyl-CoA carboxylase is a heterohexamer composed of biotin carboxyl carrier protein, biotin carboxylase and 2 subunits each of ACCase subunit alpha and ACCase plastid-coded subunit beta (accD). It depends on Zn(2+) as a cofactor.

Its subcellular location is the plastid. It is found in the chloroplast stroma. The enzyme catalyses N(6)-carboxybiotinyl-L-lysyl-[protein] + acetyl-CoA = N(6)-biotinyl-L-lysyl-[protein] + malonyl-CoA. Its pathway is lipid metabolism; malonyl-CoA biosynthesis; malonyl-CoA from acetyl-CoA: step 1/1. Functionally, component of the acetyl coenzyme A carboxylase (ACC) complex. Biotin carboxylase (BC) catalyzes the carboxylation of biotin on its carrier protein (BCCP) and then the CO(2) group is transferred by the transcarboxylase to acetyl-CoA to form malonyl-CoA. This is Acetyl-coenzyme A carboxylase carboxyl transferase subunit beta, chloroplastic from Arabis hirsuta (Hairy rock-cress).